Consider the following 89-residue polypeptide: Small ribosomal subunit protein uS17 (89 aa).

The protein belongs to the universal ribosomal protein uS17 family. In terms of assembly, part of the 30S ribosomal subunit.

Its function is as follows. One of the primary rRNA binding proteins, it binds specifically to the 5'-end of 16S ribosomal RNA. This Variovorax paradoxus (strain S110) protein is Small ribosomal subunit protein uS17.